Reading from the N-terminus, the 237-residue chain is 2-C-methyl-D-erythritol 4-phosphate cytidylyltransferase (237 aa).

Belongs to the IspD/TarI cytidylyltransferase family. IspD subfamily. Homodimer.

The catalysed reaction is 2-C-methyl-D-erythritol 4-phosphate + CTP + H(+) = 4-CDP-2-C-methyl-D-erythritol + diphosphate. It participates in isoprenoid biosynthesis; isopentenyl diphosphate biosynthesis via DXP pathway; isopentenyl diphosphate from 1-deoxy-D-xylulose 5-phosphate: step 2/6. Functionally, catalyzes the formation of 4-diphosphocytidyl-2-C-methyl-D-erythritol from CTP and 2-C-methyl-D-erythritol 4-phosphate (MEP). This Pectobacterium atrosepticum (strain SCRI 1043 / ATCC BAA-672) (Erwinia carotovora subsp. atroseptica) protein is 2-C-methyl-D-erythritol 4-phosphate cytidylyltransferase.